A 1342-amino-acid chain; its full sequence is DNA-directed RNA polymerase subunit beta (1342 aa).

The protein belongs to the RNA polymerase beta chain family. As to quaternary structure, the RNAP catalytic core consists of 2 alpha, 1 beta, 1 beta' and 1 omega subunit. When a sigma factor is associated with the core the holoenzyme is formed, which can initiate transcription.

It carries out the reaction RNA(n) + a ribonucleoside 5'-triphosphate = RNA(n+1) + diphosphate. Its function is as follows. DNA-dependent RNA polymerase catalyzes the transcription of DNA into RNA using the four ribonucleoside triphosphates as substrates. The polypeptide is DNA-directed RNA polymerase subunit beta (Pectobacterium atrosepticum (strain SCRI 1043 / ATCC BAA-672) (Erwinia carotovora subsp. atroseptica)).